The chain runs to 150 residues: Large ribosomal subunit protein bL9 (150 aa).

Belongs to the bacterial ribosomal protein bL9 family.

In terms of biological role, binds to the 23S rRNA. The sequence is that of Large ribosomal subunit protein bL9 from Neisseria meningitidis serogroup C / serotype 2a (strain ATCC 700532 / DSM 15464 / FAM18).